A 246-amino-acid polypeptide reads, in one-letter code: UL16-binding protein 6 (246 aa).

The N-terminal stretch at 1–25 (MAAAAIPALLLCLPLLFLLFGWSRA) is a signal peptide. An MHC class I alpha-1 like region spans residues 29–117 (DPHSLCYDIT…IQLENYTPKE (89 aa)). Cysteine 50 and cysteine 66 are joined by a disulfide. Asparagine 68 and asparagine 82 each carry an N-linked (GlcNAc...) asparagine glycan. Residues 118–210 (PLTLQARMSC…MDSTLEPSAG (93 aa)) form an MHC class I alpha-2 like region. A disulfide bridge links cysteine 127 with cysteine 190. A lipid anchor (GPI-anchor amidated glycine) is attached at glycine 218. A propeptide spans 219–246 (TTQLRATATTLILCCLLIILPCFILPGI) (removed in mature form).

It belongs to the MHC class I family. In terms of assembly, interacts with KLRK1/NKG2D. (Microbial infection) In CMV-infected cells, interacts with the viral glycoprotein UL16; this interaction causes relocalization from the cell surface to the cytoplasm and prevents binding to and activation of KLRK1/NKG2D, providing CMV with an immune evasion mechanism. Widely expressed. Expressed in trachea. Constitutively expressed in peripheral blood mononuclear cells, including B-cells and natural killer cells, as well as CD4+ and CD8+ T-cells and monocytes. Tends to be up-regulated in various lymphoid malignancies, including chronic lymphocytic leukemia.

Its subcellular location is the cell membrane. It is found in the endoplasmic reticulum. Binds and activates the KLRK1/NKG2D receptor, mediating natural killer cell cytotoxicity. In Homo sapiens (Human), this protein is UL16-binding protein 6 (RAET1L).